The sequence spans 140 residues: Putative pre-16S rRNA nuclease (140 aa).

Belongs to the YqgF nuclease family.

It localises to the cytoplasm. Its function is as follows. Could be a nuclease involved in processing of the 5'-end of pre-16S rRNA. In Actinobacillus succinogenes (strain ATCC 55618 / DSM 22257 / CCUG 43843 / 130Z), this protein is Putative pre-16S rRNA nuclease.